The sequence spans 293 residues: Putative DNA glycosylase At3g47830 (293 aa).

A compositionally biased stretch (basic residues) spans Met1–Leu10. Residues Met1–Thr34 are disordered. The DNA site is built by Asn108 and Lys151. Lys196 functions as the Schiff-base intermediate with DNA in the catalytic mechanism. 2 residues coordinate DNA: His216 and Asp232.

It belongs to the DNA glycosylase family.

The polypeptide is Putative DNA glycosylase At3g47830 (Arabidopsis thaliana (Mouse-ear cress)).